Here is a 268-residue protein sequence, read N- to C-terminus: 2,5-diamino-6-ribosylamino-4(3H)-pyrimidinone 5'-phosphate reductase (268 aa).

Residues T68, D72, 103-106 (SNLR), and 191-195 (GAELL) each bind NADP(+).

The protein belongs to the HTP reductase family. In terms of assembly, homodimer.

It carries out the reaction 2,5-diamino-6-(1-D-ribitylamino)pyrimidin-4(3H)-one 5'-phosphate + NADP(+) = 2,5-diamino-6-(1-D-ribosylamino)pyrimidin-4(3H)-one 5'-phosphate + NADPH + H(+). The catalysed reaction is 2,5-diamino-6-(1-D-ribitylamino)pyrimidin-4(3H)-one 5'-phosphate + NAD(+) = 2,5-diamino-6-(1-D-ribosylamino)pyrimidin-4(3H)-one 5'-phosphate + NADH + H(+). Its pathway is cofactor biosynthesis; riboflavin biosynthesis. Its function is as follows. Catalyzes an early step in riboflavin biosynthesis, the NADPH-dependent reduction of the ribose side chain of 2,5-diamino-6-ribosylamino-4(3H)-pyrimidinone 5'-phosphate, yielding 2,5-diamino-6-ribitylamino-4(3H)-pyrimidinone 5'-phosphate. The sequence is that of 2,5-diamino-6-ribosylamino-4(3H)-pyrimidinone 5'-phosphate reductase from Schizosaccharomyces pombe (strain 972 / ATCC 24843) (Fission yeast).